A 252-amino-acid polypeptide reads, in one-letter code: ATP synthase subunit a (252 aa).

6 helical membrane-spanning segments follow: residues 29–49 (FTNV…FLFI), 87–107 (FFPL…IGLF), 117–137 (IMIT…CGFY), 146–166 (LFVP…IEVI), 196–216 (FIVS…LPLI), and 219–239 (VAIT…FTVL).

Belongs to the ATPase A chain family. As to quaternary structure, F-type ATPases have 2 components, CF(1) - the catalytic core - and CF(0) - the membrane proton channel. CF(1) has five subunits: alpha(3), beta(3), gamma(1), delta(1), epsilon(1). CF(0) has three main subunits: a(1), b(2) and c(9-12). The alpha and beta chains form an alternating ring which encloses part of the gamma chain. CF(1) is attached to CF(0) by a central stalk formed by the gamma and epsilon chains, while a peripheral stalk is formed by the delta and b chains.

The protein localises to the cell inner membrane. Key component of the proton channel; it plays a direct role in the translocation of protons across the membrane. The sequence is that of ATP synthase subunit a from Bartonella bacilliformis (strain ATCC 35685 / KC583 / Herrer 020/F12,63).